The following is a 620-amino-acid chain: Notoamide biosynthesis transcriptional activator notL' (620 aa).

Residues 1-26 (MPPSSKSRRLPPAASDSAASDAQKRR) are disordered. The zn(2)-C6 fungal-type DNA-binding region spans 33 to 59 (CSACKARKLKCTGAPPCANCVKSRIEC). Residues 591–620 (ETGAFFLDPDQPSGNSTPIKSETPEGTAIS) are disordered.

It localises to the nucleus. Its function is as follows. Transcription factor that probably regulates the expression of the gene cluster that mediates the biosynthesis of notoamide, a fungal indole alkaloid that belongs to a family of natural products containing a characteristic bicyclo[2.2.2]diazaoctane core. The sequence is that of Notoamide biosynthesis transcriptional activator notL' from Aspergillus versicolor.